We begin with the raw amino-acid sequence, 142 residues long: Large ribosomal subunit protein uL13 (142 aa).

Belongs to the universal ribosomal protein uL13 family. In terms of assembly, part of the 50S ribosomal subunit.

This protein is one of the early assembly proteins of the 50S ribosomal subunit, although it is not seen to bind rRNA by itself. It is important during the early stages of 50S assembly. This Pseudomonas paraeruginosa (strain DSM 24068 / PA7) (Pseudomonas aeruginosa (strain PA7)) protein is Large ribosomal subunit protein uL13.